A 151-amino-acid polypeptide reads, in one-letter code: 3-hydroxyacyl-[acyl-carrier-protein] dehydratase FabZ (151 aa).

Residue histidine 54 is part of the active site.

This sequence belongs to the thioester dehydratase family. FabZ subfamily.

Its subcellular location is the cytoplasm. It carries out the reaction a (3R)-hydroxyacyl-[ACP] = a (2E)-enoyl-[ACP] + H2O. Its function is as follows. Involved in unsaturated fatty acids biosynthesis. Catalyzes the dehydration of short chain beta-hydroxyacyl-ACPs and long chain saturated and unsaturated beta-hydroxyacyl-ACPs. In Sodalis glossinidius (strain morsitans), this protein is 3-hydroxyacyl-[acyl-carrier-protein] dehydratase FabZ.